Here is a 513-residue protein sequence, read N- to C-terminus: ATP synthase subunit alpha (513 aa).

Glycine 169–threonine 176 is a binding site for ATP.

It belongs to the ATPase alpha/beta chains family. As to quaternary structure, F-type ATPases have 2 components, CF(1) - the catalytic core - and CF(0) - the membrane proton channel. CF(1) has five subunits: alpha(3), beta(3), gamma(1), delta(1), epsilon(1). CF(0) has three main subunits: a(1), b(2) and c(9-12). The alpha and beta chains form an alternating ring which encloses part of the gamma chain. CF(1) is attached to CF(0) by a central stalk formed by the gamma and epsilon chains, while a peripheral stalk is formed by the delta and b chains.

The protein resides in the cell inner membrane. It catalyses the reaction ATP + H2O + 4 H(+)(in) = ADP + phosphate + 5 H(+)(out). Its function is as follows. Produces ATP from ADP in the presence of a proton gradient across the membrane. The alpha chain is a regulatory subunit. In Francisella tularensis subsp. mediasiatica (strain FSC147), this protein is ATP synthase subunit alpha.